Consider the following 493-residue polypeptide: Cysteine--tRNA ligase (493 aa).

C31 lines the Zn(2+) pocket. The 'HIGH' region motif lies at 33 to 43; it reads PTVYGDAHLGH. 3 residues coordinate Zn(2+): C226, H251, and E255. The 'KMSKS' region motif lies at 283-287; the sequence is KMGKS. K286 is an ATP binding site.

This sequence belongs to the class-I aminoacyl-tRNA synthetase family. As to quaternary structure, monomer. Zn(2+) is required as a cofactor.

The protein localises to the cytoplasm. The enzyme catalyses tRNA(Cys) + L-cysteine + ATP = L-cysteinyl-tRNA(Cys) + AMP + diphosphate. This Phocaeicola vulgatus (strain ATCC 8482 / DSM 1447 / JCM 5826 / CCUG 4940 / NBRC 14291 / NCTC 11154) (Bacteroides vulgatus) protein is Cysteine--tRNA ligase.